We begin with the raw amino-acid sequence, 393 residues long: Carbamoyl phosphate synthase small chain (393 aa).

The tract at residues 1–194 is CPSase; the sequence is MSKDTTTYQG…TYVIEAEGEE (194 aa). L-glutamine contacts are provided by Ser-61, Gly-245, and Gly-247. The Glutamine amidotransferase type-1 domain occupies 195–390; that stretch reads RHTVVAYDLG…VELMDADAQK (196 aa). Cys-273 (nucleophile) is an active-site residue. L-glutamine-binding residues include Phe-274, Gln-277, Asn-315, Gly-317, and Phe-318. Residues His-363 and Glu-365 contribute to the active site.

The protein belongs to the CarA family. In terms of assembly, composed of two chains; the small (or glutamine) chain promotes the hydrolysis of glutamine to ammonia, which is used by the large (or ammonia) chain to synthesize carbamoyl phosphate. Tetramer of heterodimers (alpha,beta)4.

The enzyme catalyses hydrogencarbonate + L-glutamine + 2 ATP + H2O = carbamoyl phosphate + L-glutamate + 2 ADP + phosphate + 2 H(+). The catalysed reaction is L-glutamine + H2O = L-glutamate + NH4(+). Its pathway is amino-acid biosynthesis; L-arginine biosynthesis; carbamoyl phosphate from bicarbonate: step 1/1. It participates in pyrimidine metabolism; UMP biosynthesis via de novo pathway; (S)-dihydroorotate from bicarbonate: step 1/3. Functionally, small subunit of the glutamine-dependent carbamoyl phosphate synthetase (CPSase). CPSase catalyzes the formation of carbamoyl phosphate from the ammonia moiety of glutamine, carbonate, and phosphate donated by ATP, constituting the first step of 2 biosynthetic pathways, one leading to arginine and/or urea and the other to pyrimidine nucleotides. The small subunit (glutamine amidotransferase) binds and cleaves glutamine to supply the large subunit with the substrate ammonia. This chain is Carbamoyl phosphate synthase small chain, found in Corynebacterium glutamicum (strain ATCC 13032 / DSM 20300 / JCM 1318 / BCRC 11384 / CCUG 27702 / LMG 3730 / NBRC 12168 / NCIMB 10025 / NRRL B-2784 / 534).